The chain runs to 138 residues: Large ribosomal subunit protein bL19 (138 aa).

Belongs to the bacterial ribosomal protein bL19 family.

This protein is located at the 30S-50S ribosomal subunit interface and may play a role in the structure and function of the aminoacyl-tRNA binding site. This is Large ribosomal subunit protein bL19 from Rickettsia peacockii (strain Rustic).